A 73-amino-acid polypeptide reads, in one-letter code: Metallothionein (73 aa).

16 residues coordinate Cd(2+): cysteine 15, cysteine 20, cysteine 26, cysteine 28, cysteine 32, cysteine 34, cysteine 39, cysteine 46, cysteine 48, cysteine 52, cysteine 54, cysteine 58, cysteine 64, cysteine 66, cysteine 70, and cysteine 72.

This sequence belongs to the metallothionein superfamily. Type 2 family.

Functionally, the metallothioneins are involved in the cellular sequestration of toxic metal ions. The sequence is that of Metallothionein from Dreissena polymorpha (Zebra mussel).